A 244-amino-acid polypeptide reads, in one-letter code: Probable histone-lysine N-methyltransferase set-23 (244 aa).

One can recognise a Pre-SET domain in the interval 25 to 86; sequence EGCNCEAECS…SCRNRVVQCG (62 aa). 9 residues coordinate Zn(2+): Cys-27, Cys-29, Cys-33, Cys-39, Cys-41, Cys-65, Cys-69, Cys-71, and Cys-78. The SET domain occupies 89 to 213; it reads KKLEIFSTCE…RGEELCYDYG (125 aa). S-adenosyl-L-methionine is bound by residues 101–103, Asp-141, Tyr-143, Arg-170, and 173–174; these read KGF and NH. Zn(2+)-binding residues include Cys-176, Cys-225, Cys-227, and Cys-232. The 17-residue stretch at 221 to 237 folds into the Post-SET domain; that stretch reads NRKLCLCKSEKCRKYLP.

The protein belongs to the class V-like SAM-binding methyltransferase superfamily. Histone-lysine methyltransferase family. Suvar3-9 subfamily.

It is found in the nucleus. Its subcellular location is the chromosome. The enzyme catalyses L-lysyl-[histone] + S-adenosyl-L-methionine = N(6)-methyl-L-lysyl-[histone] + S-adenosyl-L-homocysteine + H(+). Its function is as follows. Probable histone methyltransferase. Required for embryonic development. In Caenorhabditis elegans, this protein is Probable histone-lysine N-methyltransferase set-23 (set-23).